We begin with the raw amino-acid sequence, 2513 residues long: Probable polyketide synthase 7 (2513 aa).

The Ketosynthase family 3 (KS3) domain occupies 11–441 (EKGVAIVGIG…GSNCCLLISE (431 aa)). Residues C181, H323, and H362 each act as for beta-ketoacyl synthase activity in the active site. Residues 632–665 (GVNPSFILGHSLGEISASYCSGMIDLDTFCYTVY) form an acyl/malonyl transferase region. The For acyl/malonyl transferase activity role is filled by S642. Positions 922–1044 (IDHLGISNSF…SNFQLLDHGN (123 aa)) are N-terminal hotdog fold. The PKS/mFAS DH domain maps to 922–1206 (IDHLGISNSF…CKSLIPIKDS (285 aa)). The active-site Proton acceptor; for dehydratase activity is the H956. The C-terminal hotdog fold stretch occupies residues 1061-1206 (NLSKLTKNEL…CKSLIPIKDS (146 aa)). D1119 functions as the Proton donor; for dehydratase activity in the catalytic mechanism. A Carrier domain is found at 2426–2503 (IGNKNIDELF…ISIKMILNSL (78 aa)). Position 2463 is an O-(pantetheine 4'-phosphoryl)serine (S2463).

Pantetheine 4'-phosphate serves as cofactor.

Probable polyketide synthase. This Dictyostelium discoideum (Social amoeba) protein is Probable polyketide synthase 7 (pks7).